Consider the following 551-residue polypeptide: Electron transfer flavoprotein-ubiquinone oxidoreductase (551 aa).

10–24 (VVIVGAGPAGLSAAC) is a binding site for FAD. The [4Fe-4S] cluster site is built by cysteine 496, cysteine 520, cysteine 523, and cysteine 526. One can recognise a 4Fe-4S ferredoxin-type domain in the interval 511–540 (KRFQINAQNCVHCKTCDIKDPAQNITWVAP).

The protein belongs to the ETF-QO/FixC family. The cofactor is [4Fe-4S] cluster. FAD serves as cofactor.

It catalyses the reaction a ubiquinone + reduced [electron-transfer flavoprotein] = a ubiquinol + oxidized [electron-transfer flavoprotein] + H(+). Functionally, accepts electrons from ETF and reduces ubiquinone. The chain is Electron transfer flavoprotein-ubiquinone oxidoreductase from Pseudomonas aeruginosa (strain ATCC 15692 / DSM 22644 / CIP 104116 / JCM 14847 / LMG 12228 / 1C / PRS 101 / PAO1).